A 244-amino-acid polypeptide reads, in one-letter code: 5-oxoprolinase subunit A (244 aa).

It belongs to the LamB/PxpA family. As to quaternary structure, forms a complex composed of PxpA, PxpB and PxpC.

The enzyme catalyses 5-oxo-L-proline + ATP + 2 H2O = L-glutamate + ADP + phosphate + H(+). Its function is as follows. Catalyzes the cleavage of 5-oxoproline to form L-glutamate coupled to the hydrolysis of ATP to ADP and inorganic phosphate. In Shigella sonnei (strain Ss046), this protein is 5-oxoprolinase subunit A.